A 318-amino-acid chain; its full sequence is Methionyl-tRNA formyltransferase (318 aa).

110 to 113 (SLLP) lines the (6S)-5,6,7,8-tetrahydrofolate pocket.

Belongs to the Fmt family.

The enzyme catalyses L-methionyl-tRNA(fMet) + (6R)-10-formyltetrahydrofolate = N-formyl-L-methionyl-tRNA(fMet) + (6S)-5,6,7,8-tetrahydrofolate + H(+). Attaches a formyl group to the free amino group of methionyl-tRNA(fMet). The formyl group appears to play a dual role in the initiator identity of N-formylmethionyl-tRNA by promoting its recognition by IF2 and preventing the misappropriation of this tRNA by the elongation apparatus. The chain is Methionyl-tRNA formyltransferase from Ligilactobacillus salivarius (strain UCC118) (Lactobacillus salivarius).